The following is a 206-amino-acid chain: Two-component response regulator ARR15 (206 aa).

The Response regulatory domain maps to 19-146; that stretch reads HVLAVDDSFV…DVKRLKELIM (128 aa). Aspartate 79 bears the 4-aspartylphosphate mark. The tract at residues 151 to 206 is disordered; the sequence is AEEGKTKKLSPKRILQNDIDSSPSSSSTSSSSSSHDVSSLDDDTPSSKRIKLESRG. The span at 168-187 shows a compositional bias: low complexity; that stretch reads DIDSSPSSSSTSSSSSSHDV.

Belongs to the ARR family. Type-A subfamily. Post-translationally, two-component system major event consists of a His-to-Asp phosphorelay between a sensor histidine kinase (HK) and a response regulator (RR). In plants, the His-to-Asp phosphorelay involves an additional intermediate named Histidine-containing phosphotransfer protein (HPt). This multistep phosphorelay consists of a His-Asp-His-Asp sequential transfer of a phosphate group between first a His and an Asp of the HK protein, followed by the transfer to a conserved His of the HPt protein and finally the transfer to an Asp in the receiver domain of the RR protein.

It is found in the nucleus. Its function is as follows. Functions as a response regulator involved in His-to-Asp phosphorelay signal transduction system. Phosphorylation of the Asp residue in the receiver domain activates the ability of the protein to promote the transcription of target genes. Type-A response regulators seem to act as negative regulators of the cytokinin signaling. This Arabidopsis thaliana (Mouse-ear cress) protein is Two-component response regulator ARR15 (ARR15).